We begin with the raw amino-acid sequence, 807 residues long: 1,4-alpha-glucan branching enzyme GlgB (807 aa).

Residue aspartate 405 is the Nucleophile of the active site. The active-site Proton donor is glutamate 458.

Belongs to the glycosyl hydrolase 13 family. GlgB subfamily. As to quaternary structure, monomer.

The enzyme catalyses Transfers a segment of a (1-&gt;4)-alpha-D-glucan chain to a primary hydroxy group in a similar glucan chain.. It participates in glycan biosynthesis; glycogen biosynthesis. Functionally, catalyzes the formation of the alpha-1,6-glucosidic linkages in glycogen by scission of a 1,4-alpha-linked oligosaccharide from growing alpha-1,4-glucan chains and the subsequent attachment of the oligosaccharide to the alpha-1,6 position. The sequence is that of 1,4-alpha-glucan branching enzyme GlgB from Histophilus somni (strain 129Pt) (Haemophilus somnus).